Reading from the N-terminus, the 246-residue chain is Polyhedrin (246 aa).

This sequence belongs to the polyhedrin family.

Functionally, major component of the virus occlusion bodies, which are large proteinaceous structures (polyhedra), that protect the virus from the outside environment for extended periods until they are ingested by insect larvae. In Lepidoptera (butterflies and moths), this protein is Polyhedrin (PH).